Reading from the N-terminus, the 431-residue chain is Enolase (431 aa).

Q162 is a binding site for (2R)-2-phosphoglycerate. E204 functions as the Proton donor in the catalytic mechanism. Mg(2+)-binding residues include D241, E288, and D315. Residues K340, R369, S370, and K391 each coordinate (2R)-2-phosphoglycerate. K340 (proton acceptor) is an active-site residue.

It belongs to the enolase family. The cofactor is Mg(2+).

The protein localises to the cytoplasm. It localises to the secreted. It is found in the cell surface. It catalyses the reaction (2R)-2-phosphoglycerate = phosphoenolpyruvate + H2O. It functions in the pathway carbohydrate degradation; glycolysis; pyruvate from D-glyceraldehyde 3-phosphate: step 4/5. Its function is as follows. Catalyzes the reversible conversion of 2-phosphoglycerate (2-PG) into phosphoenolpyruvate (PEP). It is essential for the degradation of carbohydrates via glycolysis. The polypeptide is Enolase (Phocaeicola vulgatus (strain ATCC 8482 / DSM 1447 / JCM 5826 / CCUG 4940 / NBRC 14291 / NCTC 11154) (Bacteroides vulgatus)).